We begin with the raw amino-acid sequence, 496 residues long: MTAATSSANGAWEAVIGLETHVQLGTNSKIFTCASTTFGDDPNTHIDPVVCGLPGTLPVLNQMVLEYAVKAAMALNLNIAEHSKFDRKQYFYPDLPKNYQISQFDEPIAEEGWIEVEVAEKGKDTYLKRIGIERLHMEEDAGKLVHAGSDRLAGSTHSLVDYNRAGVALAEIVSKPDLRTGREAAEYASEIRRIMRYLGVSDGNMQEGSLRCDVNISVRQGADAPFGTKVEIKNMNSFSAIQKACEYEIQRQIKAYEAGEAVVQETRLWDEGKQLTKSMRSKEGSSDYRYFPDPDLGPIEVIASVREGWRTELPELPSAKRHRYAEEFGLSVYDARVLTDEYAMAEYFEAAVAAGAEAKGVANWIQGDIAAYVNANRLSYSTLPFRPEQLAEMVQLIDGGKISGKIAKEILPELLEKGGSAKAIVDQRGLGMISDPAAITTIVEELLAAHPQEVEAFRGGKTKLQGFFVGQLMKKTGGKADPKLANQILSQKLKGG.

It belongs to the GatB/GatE family. GatB subfamily. Heterotrimer of A, B and C subunits.

The catalysed reaction is L-glutamyl-tRNA(Gln) + L-glutamine + ATP + H2O = L-glutaminyl-tRNA(Gln) + L-glutamate + ADP + phosphate + H(+). It carries out the reaction L-aspartyl-tRNA(Asn) + L-glutamine + ATP + H2O = L-asparaginyl-tRNA(Asn) + L-glutamate + ADP + phosphate + 2 H(+). In terms of biological role, allows the formation of correctly charged Asn-tRNA(Asn) or Gln-tRNA(Gln) through the transamidation of misacylated Asp-tRNA(Asn) or Glu-tRNA(Gln) in organisms which lack either or both of asparaginyl-tRNA or glutaminyl-tRNA synthetases. The reaction takes place in the presence of glutamine and ATP through an activated phospho-Asp-tRNA(Asn) or phospho-Glu-tRNA(Gln). This chain is Aspartyl/glutamyl-tRNA(Asn/Gln) amidotransferase subunit B, found in Prochlorococcus marinus (strain MIT 9303).